Consider the following 271-residue polypeptide: Protein FAM110D (271 aa).

3 disordered regions span residues 1 to 83, 116 to 145, and 186 to 245; these read MLLA…RPDS, PRDAAPSSPASTERPAASGGWAAPQDAPEA, and PQSW…PVSV. Over residues 68-78 the composition is skewed to basic residues; it reads RPVRRGSGRRL. Low complexity predominate over residues 116–126; the sequence is PRDAAPSSPAS. Positions 220-231 are enriched in gly residues; the sequence is SPGGAGGGGGSE.

Belongs to the FAM110 family.

The sequence is that of Protein FAM110D (FAM110D) from Homo sapiens (Human).